We begin with the raw amino-acid sequence, 581 residues long: Adenine deaminase (581 aa).

This sequence belongs to the metallo-dependent hydrolases superfamily. Adenine deaminase family. Requires Mn(2+) as cofactor.

The enzyme catalyses adenine + H2O + H(+) = hypoxanthine + NH4(+). This is Adenine deaminase from Brucella melitensis biotype 1 (strain ATCC 23456 / CCUG 17765 / NCTC 10094 / 16M).